Consider the following 328-residue polypeptide: MYVPDVAEDLCLDIFHKQKQVISRYFANFHCDVVRQLTERLLCHQGAVFFSGIGKSGCIARKLVATMQSFGEKAFFLSGDLLHGDLGVVSSGDIVCLFSNSGETREILEWIPHLKNRQVFLVGITSSPCSSLAVFSDFVVMLPKLEELDPFNLIPTTSTTCQLLFSDLLAMTVLRCRKISLSDYGKNHPSGQIGLKANGKVRDYLSPRTEVPFCSPSITVSEALTVLSSYGYGCVCVVNEQFELLGIFTDGDLRRGLSECGGAILECPLEQVMTRKPKVISEDSDVLLGLEMMESGNPVTVLPVVDAQHQRFIVGLLHMHTLARAGLL.

An SIS domain is found at 37 to 179 (LTERLLCHQG…AMTVLRCRKI (143 aa)). Position 52 to 57 (52 to 57 (GIGKSG)) interacts with ATP. CBS domains follow at residues 205 to 264 (LSPR…GGAI) and 273 to 328 (MTRK…AGLL).

It belongs to the SIS family. GutQ/KpsF subfamily.

This is an uncharacterized protein from Chlamydia muridarum (strain MoPn / Nigg).